A 572-amino-acid chain; its full sequence is Phosphoglucomutase-1 (572 aa).

Residues T23, R27, 126–127, and K140 contribute to the substrate site; that span reads SH. The active-site Phosphoserine intermediate is the S126. Mg(2+) is bound at residue S126. Mg(2+) is bound by residues D308, D310, and D312. Residues 312–313, T373, 392–394, K405, and R527 each bind substrate; these read DR and EES.

The protein belongs to the phosphohexose mutase family. The cofactor is Mg(2+). Post-translationally, phosphorylated via a calcium-dependent protein kinase. Very rapidly (within 80 ms) dephosphorylated during triggered trichocyst exocytosis. O-glycosylated with a short chain of mannose residues.

The protein resides in the cytoplasm. The catalysed reaction is alpha-D-glucose 1-phosphate = alpha-D-glucose 6-phosphate. May be involved in membrane fusion in exocytosis. The polypeptide is Phosphoglucomutase-1 (pp63-1) (Paramecium tetraurelia).